Here is a 370-residue protein sequence, read N- to C-terminus: Dual-specificity RNA methyltransferase RlmN (370 aa).

Glutamate 93 serves as the catalytic Proton acceptor. The region spanning 99-331 (DRKRGTLCVS…TRVRRTRGDD (233 aa)) is the Radical SAM core domain. Cysteine 106 and cysteine 336 form a disulfide bridge. Positions 113, 117, and 120 each coordinate [4Fe-4S] cluster. S-adenosyl-L-methionine-binding positions include 162–163 (GE), serine 194, 216–218 (SLH), and asparagine 293. The S-methylcysteine intermediate role is filled by cysteine 336.

This sequence belongs to the radical SAM superfamily. RlmN family. Requires [4Fe-4S] cluster as cofactor.

The protein localises to the cytoplasm. It catalyses the reaction adenosine(2503) in 23S rRNA + 2 reduced [2Fe-2S]-[ferredoxin] + 2 S-adenosyl-L-methionine = 2-methyladenosine(2503) in 23S rRNA + 5'-deoxyadenosine + L-methionine + 2 oxidized [2Fe-2S]-[ferredoxin] + S-adenosyl-L-homocysteine. It carries out the reaction adenosine(37) in tRNA + 2 reduced [2Fe-2S]-[ferredoxin] + 2 S-adenosyl-L-methionine = 2-methyladenosine(37) in tRNA + 5'-deoxyadenosine + L-methionine + 2 oxidized [2Fe-2S]-[ferredoxin] + S-adenosyl-L-homocysteine. Its function is as follows. Specifically methylates position 2 of adenine 2503 in 23S rRNA and position 2 of adenine 37 in tRNAs. m2A2503 modification seems to play a crucial role in the proofreading step occurring at the peptidyl transferase center and thus would serve to optimize ribosomal fidelity. This Coxiella burnetii (strain CbuK_Q154) (Coxiella burnetii (strain Q154)) protein is Dual-specificity RNA methyltransferase RlmN.